The primary structure comprises 752 residues: Ribosomal protein S6 kinase 2 alpha (752 aa).

The region spanning Phe80–Tyr339 is the Protein kinase 1 domain. ATP-binding positions include Leu86–Val94 and Lys112. Asp205 acts as the Proton acceptor in catalysis. Ser239 carries the phosphoserine modification. Residues Ser340–Lys409 enclose the AGC-kinase C-terminal domain. Thr377 carries the phosphothreonine modification. Phosphoserine is present on Ser381. The residue at position 398 (Ser398) is a Phosphoserine; by autocatalysis. Positions Tyr435–Ile692 constitute a Protein kinase 2 domain. Residues Ile441–Cys449 and Lys464 each bind ATP. Residue Asp552 is the Proton acceptor of the active site. Thr590 carries the post-translational modification Phosphothreonine. Ser749 bears the Phosphoserine mark.

This sequence belongs to the protein kinase superfamily. AGC Ser/Thr protein kinase family. S6 kinase subfamily. The cofactor is Mg(2+). Post-translationally, autophosphorylated on Ser-398, as part of the activation process. Small and large intestine, spleen, stomach, and bursa, and to a lesser extent lung and kidney.

The catalysed reaction is L-seryl-[protein] + ATP = O-phospho-L-seryl-[protein] + ADP + H(+). The enzyme catalyses L-threonyl-[protein] + ATP = O-phospho-L-threonyl-[protein] + ADP + H(+). Activated by multiple phosphorylations on threonine and serine residues. In terms of biological role, serine/threonine kinase that may play a role in mediating the growth-factor and stress induced activation of transcription. The protein is Ribosomal protein S6 kinase 2 alpha (RPS6KA) of Gallus gallus (Chicken).